Here is a 124-residue protein sequence, read N- to C-terminus: Ribonuclease pancreatic (124 aa).

A disordered region spans residues 1 to 23 (RESPAMKFQRQHMDSGNSPGNNP). Residues lysine 7 and arginine 10 each contribute to the substrate site. Histidine 12 acts as the Proton acceptor in catalysis. Residues 14-23 (DSGNSPGNNP) show a composition bias toward polar residues. Cystine bridges form between cysteine 26-cysteine 84, cysteine 40-cysteine 95, cysteine 58-cysteine 110, and cysteine 65-cysteine 72. Substrate-binding positions include 41–45 (KPVNT) and lysine 66. Residue asparagine 76 is glycosylated (N-linked (GlcNAc...) asparagine; partial). Arginine 85 is a binding site for substrate. Histidine 119 serves as the catalytic Proton donor.

The protein belongs to the pancreatic ribonuclease family. Monomer. Interacts with and forms tight 1:1 complexes with RNH1. Dimerization of two such complexes may occur. Interaction with RNH1 inhibits this protein. Pancreas.

It is found in the secreted. The catalysed reaction is an [RNA] containing cytidine + H2O = an [RNA]-3'-cytidine-3'-phosphate + a 5'-hydroxy-ribonucleotide-3'-[RNA].. It carries out the reaction an [RNA] containing uridine + H2O = an [RNA]-3'-uridine-3'-phosphate + a 5'-hydroxy-ribonucleotide-3'-[RNA].. Its function is as follows. Endonuclease that catalyzes the cleavage of RNA on the 3' side of pyrimidine nucleotides. Acts on single-stranded and double-stranded RNA. This chain is Ribonuclease pancreatic (RNASE1), found in Balaenoptera acutorostrata (Common minke whale).